The following is a 362-amino-acid chain: Putative gustatory receptor 89a (362 aa).

The Cytoplasmic portion of the chain corresponds to 1 to 38 (MLRFPHVCGLCLLLKYWQILALAPFRTSEPMVARCQRW). A helical transmembrane segment spans residues 39–59 (MTLIAVFRWLLLTSMAPFVLW). Topologically, residues 60–74 (KSAAMYEATNVRHSM) are extracellular. The helical transmembrane segment at 75-95 (VFKTIALATMTGDVCISLALL) threads the bilayer. Residues 96 to 126 (GNHLWNRRELANLVNDLARLHRRRRLSWWST) lie on the Cytoplasmic side of the membrane. The chain crosses the membrane as a helical span at residues 127–147 (LFLWLKLLLSLYDLLCSVPFL). At 148–166 (KGAGGRLPWSQLVAYGVQL) the chain is on the extracellular side. Residues 167 to 187 (YFQHVASVYGNGIFGGILLML) form a helical membrane-spanning segment. Residues 188-223 (ECYNQLEREEPTNLARLLQKEYSWLRLIQRFVKLFQ) lie on the Cytoplasmic side of the membrane. The chain crosses the membrane as a helical span at residues 224–244 (LGIFLLVLGSFVNIMVNIYAF). Over 245-255 (MSYYVSLHGVP) the chain is Extracellular. Residues 256–276 (LTISNNCLVLAIQLYAVILAA) traverse the membrane as a helical segment. Over 277–333 (HLCQVRSAKLRKKCLQLEYVPEGLTQEQAMASTPFPVLTPTGNVKFRILGVFILDNS) the chain is Cytoplasmic. A helical transmembrane segment spans residues 334–354 (FWLFLVSYAMNFIVVILQTSF). Over 355 to 362 (EHINHGEI) the chain is Extracellular.

Belongs to the insect chemoreceptor superfamily. Gustatory receptor (GR) family. Gr77a subfamily.

It is found in the cell membrane. Probable gustatory receptor which mediates acceptance or avoidance behavior, depending on its substrates. This is Putative gustatory receptor 89a (Gr89a) from Drosophila melanogaster (Fruit fly).